Here is a 376-residue protein sequence, read N- to C-terminus: DNA polymerase IV (376 aa).

In terms of domain architecture, UmuC spans 6–187; the sequence is IIHIDMDAFF…LSIGKFYGVG (182 aa). The Mg(2+) site is built by D10 and D105. The active site involves E106.

It belongs to the DNA polymerase type-Y family. In terms of assembly, monomer. Requires Mg(2+) as cofactor.

Its subcellular location is the cytoplasm. It catalyses the reaction DNA(n) + a 2'-deoxyribonucleoside 5'-triphosphate = DNA(n+1) + diphosphate. Functionally, poorly processive, error-prone DNA polymerase involved in untargeted mutagenesis. Copies undamaged DNA at stalled replication forks, which arise in vivo from mismatched or misaligned primer ends. These misaligned primers can be extended by PolIV. Exhibits no 3'-5' exonuclease (proofreading) activity. May be involved in translesional synthesis, in conjunction with the beta clamp from PolIII. In Desulfotalea psychrophila (strain LSv54 / DSM 12343), this protein is DNA polymerase IV.